A 193-amino-acid chain; its full sequence is MIGRIQGTLVSVHPPRLLVDCQGISYEVDVPMSTLYQLPQAGQKITLLTHFQVREDAQQLFGFATETEREAFRQLIKISGVGSRTALAVLSGMSVNELAQAIALQEAGRLTQVPGIGKRTAERLCLELKGKLAPDLGVAGGKPQAIETSSEVLQALLALGYSEKEALLALKQIPADTSISDGIRMGLKYLSKA.

Residues 1-64 form a domain I region; the sequence is MIGRIQGTLV…EDAQQLFGFA (64 aa). Positions 65–139 are domain II; that stretch reads TETEREAFRQ…GKLAPDLGVA (75 aa). The segment at 139-143 is flexible linker; that stretch reads AGGKP. Residues 144 to 193 are domain III; sequence QAIETSSEVLQALLALGYSEKEALLALKQIPADTSISDGIRMGLKYLSKA.

The protein belongs to the RuvA family. As to quaternary structure, homotetramer. Forms an RuvA(8)-RuvB(12)-Holliday junction (HJ) complex. HJ DNA is sandwiched between 2 RuvA tetramers; dsDNA enters through RuvA and exits via RuvB. An RuvB hexamer assembles on each DNA strand where it exits the tetramer. Each RuvB hexamer is contacted by two RuvA subunits (via domain III) on 2 adjacent RuvB subunits; this complex drives branch migration. In the full resolvosome a probable DNA-RuvA(4)-RuvB(12)-RuvC(2) complex forms which resolves the HJ.

The protein localises to the cytoplasm. Its function is as follows. The RuvA-RuvB-RuvC complex processes Holliday junction (HJ) DNA during genetic recombination and DNA repair, while the RuvA-RuvB complex plays an important role in the rescue of blocked DNA replication forks via replication fork reversal (RFR). RuvA specifically binds to HJ cruciform DNA, conferring on it an open structure. The RuvB hexamer acts as an ATP-dependent pump, pulling dsDNA into and through the RuvAB complex. HJ branch migration allows RuvC to scan DNA until it finds its consensus sequence, where it cleaves and resolves the cruciform DNA. The chain is Holliday junction branch migration complex subunit RuvA from Polynucleobacter necessarius subsp. necessarius (strain STIR1).